Reading from the N-terminus, the 454-residue chain is Probable N-octanoylanthranilate hydrolase AqdA2 (454 aa).

Residue serine 185 is the Acyl-ester intermediate of the active site. Catalysis depends on charge relay system residues glutamate 306 and histidine 379.

It belongs to the type-B carboxylesterase/lipase family.

It carries out the reaction N-octanoylanthranilate + H2O = anthranilate + octanoate + H(+). Its function is as follows. Involved in the degradation of the Pseudomonas aeruginosa quorum sensing signal molecules HHQ (2-heptyl-4-quinolone) and PQS (2-heptyl-3-hydroxy-4-quinolone) to anthranilic acid. Probably catalyzes the hydrolysis of N-octanoylanthranilic acid to anthranilic acid. The polypeptide is Probable N-octanoylanthranilate hydrolase AqdA2 (Rhodococcus erythropolis (Arthrobacter picolinophilus)).